Reading from the N-terminus, the 314-residue chain is Methionyl-tRNA formyltransferase (314 aa).

110 to 113 lines the (6S)-5,6,7,8-tetrahydrofolate pocket; sequence SLLP.

Belongs to the Fmt family.

The enzyme catalyses L-methionyl-tRNA(fMet) + (6R)-10-formyltetrahydrofolate = N-formyl-L-methionyl-tRNA(fMet) + (6S)-5,6,7,8-tetrahydrofolate + H(+). Functionally, attaches a formyl group to the free amino group of methionyl-tRNA(fMet). The formyl group appears to play a dual role in the initiator identity of N-formylmethionyl-tRNA by promoting its recognition by IF2 and preventing the misappropriation of this tRNA by the elongation apparatus. In Bacillus cytotoxicus (strain DSM 22905 / CIP 110041 / 391-98 / NVH 391-98), this protein is Methionyl-tRNA formyltransferase.